Reading from the N-terminus, the 347-residue chain is Heat-inducible transcription repressor HrcA (347 aa).

This sequence belongs to the HrcA family.

Negative regulator of class I heat shock genes (grpE-dnaK-dnaJ and groELS operons). Prevents heat-shock induction of these operons. The chain is Heat-inducible transcription repressor HrcA from Rhodococcus erythropolis (strain PR4 / NBRC 100887).